Here is a 561-residue protein sequence, read N- to C-terminus: MNINVAELLNGNYILLLFVVLALGLCLGKLRLGSIQLGNSIGVLVVSLLLGQQHFSINTDALNLGFMLFIFCVGVEAGPNFFSIFFRDGKNYLMLALVMVGSALVIALGLGKLFGWDIGLTAGMLAGSMTSTPVLVGAGDTLRHSGMESRQLSLALDNLSLGYALTYLIGLVSLIVGARYLPKLQHQDLQTSAQQIARERGLDTDANRKVYLPVIRAYRVGPELVAWTDGKNLRELGIYRQTGCYIERIRRNGILANPDGDAVLQMGDEIALVGYPDAHARLDPSFRNGKEVFDRDLLDMRIVTEEVVVKNHNAVGKCLAQLKLTDHGCFLNRVIRSQIEMPIDDNVVLNKGDVLQVSGDARRVKTIADRIGFISIHSQVTDLLAFCAFFVIGLMIGMITFQFSTFSFGMGNAAGLLFAGIMLGFMRANHPTFGYIPQGALSMVKEFGLMVFMAGVGLSAGSGINNGLGAIGGQMLIAGLIVSLVPVVICFLFGAYVLRMNRALLFGAMMGARTCAPAMEIISDTARSNIPALGYAGTYAIANVLLTLAGTIIVMVCPGLG.

The next 5 membrane-spanning stretches (helical) occupy residues 8–28 (LLNGNYILLLFVVLALGLCLG), 32–52 (LGSIQLGNSIGVLVVSLLLGQ), 66–86 (FMLFIFCVGVEAGPNFFSIFF), 94–114 (MLALVMVGSALVIALGLGKLF), and 158–178 (NLSLGYALTYLIGLVSLIVGA). RCK C-terminal domains follow at residues 200–288 (RGLD…SFRN) and 292–373 (VFDR…RIGF). A run of 6 helical transmembrane segments spans residues 383–403 (LLAFCAFFVIGLMIGMITFQF), 406–426 (FSFGMGNAAGLLFAGIMLGFM), 451–471 (VFMAGVGLSAGSGINNGLGAI), 475–495 (MLIAGLIVSLVPVVICFLFGA), 503–523 (ALLFGAMMGARTCAPAMEIIS), and 540–560 (AIANVLLTLAGTIIVMVCPGL).

The protein belongs to the AAE transporter (TC 2.A.81) family. YbjL subfamily.

It is found in the cell membrane. The polypeptide is Putative transport protein YbjL (Shigella dysenteriae serotype 1 (strain Sd197)).